A 242-amino-acid chain; its full sequence is Orotidine 5'-phosphate decarboxylase (242 aa).

Substrate is bound by residues D21, K43, 71–80, T124, R185, Q195, G215, and R216; that span reads DLKFFDVPET. K73 serves as the catalytic Proton donor.

This sequence belongs to the OMP decarboxylase family. Type 1 subfamily. As to quaternary structure, homodimer.

It carries out the reaction orotidine 5'-phosphate + H(+) = UMP + CO2. The protein operates within pyrimidine metabolism; UMP biosynthesis via de novo pathway; UMP from orotate: step 2/2. Its function is as follows. Catalyzes the decarboxylation of orotidine 5'-monophosphate (OMP) to uridine 5'-monophosphate (UMP). The sequence is that of Orotidine 5'-phosphate decarboxylase from Methylococcus capsulatus (strain ATCC 33009 / NCIMB 11132 / Bath).